We begin with the raw amino-acid sequence, 381 residues long: Cytochrome b (381 aa).

4 helical membrane passes run 34 to 54, 78 to 99, 114 to 134, and 179 to 199; these read FGSLLGLCLIMQIITGLFLAM, WLMRNIHAYGASFFFICIYLHI, WNIGVVLLFLLMATAFVGYVL, and FFAFHFLLPFLILALSVIHIL. Heme b contacts are provided by His84 and His98. His183 and His197 together coordinate heme b. His202 lines the a ubiquinone pocket. The next 4 helical transmembrane spans lie at 227-247, 289-309, 321-341, and 348-368; these read YKDLFGFLIVITLLATLALFM, LGGVLALLFSIFILLLVPLLH, LTQIFFWSLVTNAIILTWIGG, and FIMVGQIASVAYFSLFLFVIP.

Belongs to the cytochrome b family. In terms of assembly, the cytochrome bc1 complex contains 3 respiratory subunits (MT-CYB, CYC1 and UQCRFS1), 2 core proteins (UQCRC1 and UQCRC2) and probably 6 low-molecular weight proteins. Requires heme b as cofactor.

Its subcellular location is the mitochondrion inner membrane. Functionally, component of the ubiquinol-cytochrome c reductase complex (complex III or cytochrome b-c1 complex) that is part of the mitochondrial respiratory chain. The b-c1 complex mediates electron transfer from ubiquinol to cytochrome c. Contributes to the generation of a proton gradient across the mitochondrial membrane that is then used for ATP synthesis. This Scyliorhinus canicula (Small-spotted catshark) protein is Cytochrome b (mt-cyb).